A 162-amino-acid chain; its full sequence is Necrosis-inducing secreted protein 1 (162 aa).

Positions 1–19 (MQFLTSLAAAASLVSLASA) are cleaved as a signal peptide. N-linked (GlcNAc...) asparagine glycans are attached at residues N88, N126, N133, and N150. The tract at residues 103–132 (EYVIAASLFSLYGASSSPTVSNYNVTVNVG) is BAK1/SERK3-binding.

This sequence belongs to the NIS1 effector family. In terms of assembly, interacts with the host pattern recognition receptor (PRR)-associated kinases BAK1/SERK3, BKK1/SERK4 and BIK1.

It localises to the secreted. The protein localises to the host cytoplasm. Secreted effector that induces necrotic lesions in Nicotiana benthamiana. Interacts with the host receptor-like kinases (RLKs) BAK1/SERK3 and BKK1/SERK4, inhibits their kinase activity and suppresses INF1-induced pathogen-associated molecular pattern (PAMP)-triggered immunity (PTI) in N.benthamiana. Also interacts with the host receptor-like cytoplasmic kinase (RLCK) BIK1 and inhibits its kinase activity, thereby inhibiting PAMP-induced ROS generation. In PTI, phosphorylation relaying by RLKs and RLCKs is critical for the initiation of downstream signaling. The chain is Necrosis-inducing secreted protein 1 from Colletotrichum orbiculare (strain 104-T / ATCC 96160 / CBS 514.97 / LARS 414 / MAFF 240422) (Cucumber anthracnose fungus).